The following is a 113-amino-acid chain: MHELSLCMSAADIIREQAEQHGIARVTDVWLEVGALADVEESALHFCFDIACRDTVAQGCTLHIDVIPAQAWCWDCSREAEIMQHAGCCPHCGSERLRISEGDDLRVKSLEGE.

Ni(2+) is bound by residues H2 and E3. 4 residues coordinate Zn(2+): C73, C76, C89, and C92.

Belongs to the HypA/HybF family. HybF subfamily.

Involved in the maturation of [NiFe] hydrogenases. Required for nickel insertion into the metal center of the hydrogenase. The polypeptide is Hydrogenase maturation factor HybF (Morganella morganii (Proteus morganii)).